Consider the following 243-residue polypeptide: Uridine-cytidine kinase B (243 aa).

22 to 29 lines the ATP pocket; sequence GGTASGKT.

This sequence belongs to the uridine kinase family.

It catalyses the reaction uridine + ATP = UMP + ADP + H(+). The catalysed reaction is cytidine + ATP = CMP + ADP + H(+). It participates in pyrimidine metabolism; CTP biosynthesis via salvage pathway; CTP from cytidine: step 1/3. Its pathway is pyrimidine metabolism; UMP biosynthesis via salvage pathway; UMP from uridine: step 1/1. Catalyzes the conversion of uridine into uridine monophosphate and cytidine into cytidine monophosphate in the pyrimidine salvage pathway. The sequence is that of Uridine-cytidine kinase B (udkB) from Dictyostelium discoideum (Social amoeba).